The primary structure comprises 221 residues: 2,3-bisphosphoglycerate-dependent phosphoglycerate mutase (221 aa).

Substrate is bound by residues 8–15 (RHGNSLWN), 21–22 (TG), arginine 60, 87–90 (ERHY), lysine 98, 114–115 (RR), and 174–175 (GN). Histidine 9 serves as the catalytic Tele-phosphohistidine intermediate. The Proton donor/acceptor role is filled by glutamate 87. The segment at 114-140 (RRGYDTPPPPLHSQADDPRYEEPPPLS) is disordered.

It belongs to the phosphoglycerate mutase family. BPG-dependent PGAM subfamily.

It carries out the reaction (2R)-2-phosphoglycerate = (2R)-3-phosphoglycerate. Its pathway is carbohydrate degradation; glycolysis; pyruvate from D-glyceraldehyde 3-phosphate: step 3/5. Its function is as follows. Catalyzes the interconversion of 2-phosphoglycerate and 3-phosphoglycerate. The protein is 2,3-bisphosphoglycerate-dependent phosphoglycerate mutase of Tropheryma whipplei (strain TW08/27) (Whipple's bacillus).